The primary structure comprises 736 residues: 1,4-alpha-glucan branching enzyme GlgB (736 aa).

Asp415 (nucleophile) is an active-site residue. Glu470 acts as the Proton donor in catalysis.

Belongs to the glycosyl hydrolase 13 family. GlgB subfamily. As to quaternary structure, monomer.

The enzyme catalyses Transfers a segment of a (1-&gt;4)-alpha-D-glucan chain to a primary hydroxy group in a similar glucan chain.. The protein operates within glycan biosynthesis; glycogen biosynthesis. Functionally, catalyzes the formation of the alpha-1,6-glucosidic linkages in glycogen by scission of a 1,4-alpha-linked oligosaccharide from growing alpha-1,4-glucan chains and the subsequent attachment of the oligosaccharide to the alpha-1,6 position. This is 1,4-alpha-glucan branching enzyme GlgB from Paraburkholderia xenovorans (strain LB400).